Here is a 413-residue protein sequence, read N- to C-terminus: DnaJ protein homolog xdj1 (413 aa).

Residues 6–73 form the J domain; that stretch reads KLYDILEVHF…ESREMYDMYG (68 aa). The segment at 134 to 219 adopts a CR-type zinc-finger fold; the sequence is GKEVKLRATR…CKGSGTVPEQ (86 aa). CXXCXGXG motif repeat units follow at residues 147–154, 164–171, 191–198, and 207–214; these read CPRCQGRG, CLSCDGKG, CDTCNGKG, and CKHCKGSG. Cysteine 410 is modified (cysteine methyl ester). Cysteine 410 carries S-farnesyl cysteine lipidation. A propeptide spans 411 to 413 (removed in mature form); it reads QAQ.

Its subcellular location is the endoplasmic reticulum membrane. This is DnaJ protein homolog xdj1 (xdj1) from Schizosaccharomyces pombe (strain 972 / ATCC 24843) (Fission yeast).